The chain runs to 255 residues: Imidazole glycerol phosphate synthase subunit HisF (255 aa).

Active-site residues include aspartate 11 and aspartate 130.

This sequence belongs to the HisA/HisF family. In terms of assembly, heterodimer of HisH and HisF.

It localises to the cytoplasm. The enzyme catalyses 5-[(5-phospho-1-deoxy-D-ribulos-1-ylimino)methylamino]-1-(5-phospho-beta-D-ribosyl)imidazole-4-carboxamide + L-glutamine = D-erythro-1-(imidazol-4-yl)glycerol 3-phosphate + 5-amino-1-(5-phospho-beta-D-ribosyl)imidazole-4-carboxamide + L-glutamate + H(+). It participates in amino-acid biosynthesis; L-histidine biosynthesis; L-histidine from 5-phospho-alpha-D-ribose 1-diphosphate: step 5/9. Functionally, IGPS catalyzes the conversion of PRFAR and glutamine to IGP, AICAR and glutamate. The HisF subunit catalyzes the cyclization activity that produces IGP and AICAR from PRFAR using the ammonia provided by the HisH subunit. The polypeptide is Imidazole glycerol phosphate synthase subunit HisF (Exiguobacterium sp. (strain ATCC BAA-1283 / AT1b)).